The primary structure comprises 154 residues: Insulin-like growth factor 1 (154 aa).

The tract at residues 50–78 (GPETLCGAELVDALQFVCGDRGFYFNKPT) is b. Cystine bridges form between Cys-55–Cys-97, Cys-67–Cys-110, and Cys-96–Cys-101. Residues 79–90 (GYGSSSRRAPQT) form a c region. Residues 91 to 111 (GIVDECCFRSCDLRRLEMYCA) form an a region. The tract at residues 112-119 (PLKPAKSA) is d. Residues 120–154 (RSVRAQRHTDMPKAQKEVHLKNTSRGSAGNKNYRM) constitute a propeptide, e peptide. A disordered region spans residues 121 to 154 (SVRAQRHTDMPKAQKEVHLKNTSRGSAGNKNYRM). The span at 126 to 139 (RHTDMPKAQKEVHL) shows a compositional bias: basic and acidic residues. Polar residues predominate over residues 140–154 (KNTSRGSAGNKNYRM).

It belongs to the insulin family. In terms of assembly, forms a ternary complex with IGFR1 and ITGAV:ITGB3. Forms a ternary complex with IGFR1 and ITGA6:ITGB4. Forms a ternary complex with IGFBP3 and ALS.

It is found in the secreted. In terms of biological role, the insulin-like growth factors, isolated from plasma, are structurally and functionally related to insulin but have a much higher growth-promoting activity. May be a physiological regulator of [1-14C]-2-deoxy-D-glucose (2DG) transport and glycogen synthesis in osteoblasts. Stimulates glucose transport in bone-derived osteoblastic (PyMS) cells and is effective at much lower concentrations than insulin, not only regarding glycogen and DNA synthesis but also with regard to enhancing glucose uptake. May play a role in synapse maturation. Ca(2+)-dependent exocytosis of IGF1 is required for sensory perception of smell in the olfactory bulb. Acts as a ligand for IGF1R. Binds to the alpha subunit of IGF1R, leading to the activation of the intrinsic tyrosine kinase activity which autophosphorylates tyrosine residues in the beta subunit thus initiating a cascade of down-stream signaling events leading to activation of the PI3K-AKT/PKB and the Ras-MAPK pathways. Binds to integrins ITGAV:ITGB3 and ITGA6:ITGB4. Its binding to integrins and subsequent ternary complex formation with integrins and IGFR1 are essential for IGF1 signaling. Induces the phosphorylation and activation of IGFR1, MAPK3/ERK1, MAPK1/ERK2 and AKT1. As part of the MAPK/ERK signaling pathway, acts as a negative regulator of apoptosis in cardiomyocytes via promotion of STUB1/CHIP-mediated ubiquitination and degradation of ICER-type isoforms of CREM. The protein is Insulin-like growth factor 1 of Bos taurus (Bovine).